The sequence spans 40 residues: Photosystem II reaction center protein J (40 aa).

The chain crosses the membrane as a helical span at residues 8–28; that stretch reads IPLWVVATIAGLGVITVVGIF.

Belongs to the PsbJ family. As to quaternary structure, PSII is composed of 1 copy each of membrane proteins PsbA, PsbB, PsbC, PsbD, PsbE, PsbF, PsbH, PsbI, PsbJ, PsbK, PsbL, PsbM, PsbT, PsbX, PsbY, PsbZ, Psb30/Ycf12, peripheral proteins PsbO, CyanoQ (PsbQ), PsbU, PsbV and a large number of cofactors. It forms dimeric complexes.

Its subcellular location is the cellular thylakoid membrane. One of the components of the core complex of photosystem II (PSII). PSII is a light-driven water:plastoquinone oxidoreductase that uses light energy to abstract electrons from H(2)O, generating O(2) and a proton gradient subsequently used for ATP formation. It consists of a core antenna complex that captures photons, and an electron transfer chain that converts photonic excitation into a charge separation. This Trichormus variabilis (strain ATCC 29413 / PCC 7937) (Anabaena variabilis) protein is Photosystem II reaction center protein J.